Reading from the N-terminus, the 188-residue chain is Translocon-associated protein subunit beta (188 aa).

The signal sequence occupies residues 1–15 (MKFSLFALLFVVVSC). Topologically, residues 16 to 151 (VDVGTQTRDA…EYDRRFAPKY (136 aa)) are lumenal. N-linked (GlcNAc...) asparagine glycosylation is found at asparagine 93 and asparagine 109. The chain crosses the membrane as a helical span at residues 152–172 (TYFLVFFLIVAPTTLGSFLLF). Residues 173–188 (QQSKARFPNVIKKKST) lie on the Cytoplasmic side of the membrane.

This sequence belongs to the TRAP-beta family. In terms of assembly, heterotetramer of TRAP-alpha, TRAP-beta, TRAP-delta and TRAP-gamma.

The protein resides in the endoplasmic reticulum membrane. TRAP proteins are part of a complex whose function is to bind calcium to the ER membrane and thereby regulate the retention of ER resident proteins. In Caenorhabditis elegans, this protein is Translocon-associated protein subunit beta.